Reading from the N-terminus, the 479-residue chain is Altronate oxidoreductase (479 aa).

18 to 29 serves as a coordination point for NAD(+); it reads IIQFGEGNFLRA.

The protein belongs to the mannitol dehydrogenase family. UxaB subfamily.

It catalyses the reaction D-altronate + NAD(+) = keto-D-tagaturonate + NADH + H(+). It functions in the pathway carbohydrate metabolism; pentose and glucuronate interconversion. The chain is Altronate oxidoreductase from Phocaeicola vulgatus (strain ATCC 8482 / DSM 1447 / JCM 5826 / CCUG 4940 / NBRC 14291 / NCTC 11154) (Bacteroides vulgatus).